A 231-amino-acid chain; its full sequence is MGQKVHPIGFRLGITQKHRSYWCTTPQKSALWIQDASFLRNFIKKKYIGAGITHIEIQRQDVDSPSLGIQIYAARLRQIAGNDSKGLERLQEELVKQLQIFYRKRNLVEPGTIHLRLSVKPLRAPEAYAEVLAEKLVEELEQRKPFRRAMRQTVQRALRAGVKGIKVQISGRLNGADIARSEDVREGPVPLQTLRADIDYSSKPAKTIFGLLGIKIWVFRGERLTRISNVR.

Residues 39 to 123 (LRNFIKKKYI…HLRLSVKPLR (85 aa)) enclose the KH type-2 domain.

Belongs to the universal ribosomal protein uS3 family. Part of the 30S ribosomal subunit.

Its subcellular location is the plastid. It localises to the chloroplast. The chain is Small ribosomal subunit protein uS3c (rps3) from Chlorella vulgaris (Green alga).